Here is a 332-residue protein sequence, read N- to C-terminus: Decaprenyl-phosphate phosphoribosyltransferase (332 aa).

Over residues Met-1–Thr-12 the composition is skewed to basic and acidic residues. The tract at residues Met-1 to Asn-36 is disordered. 2 helical membrane passes run Trp-50–Asn-70 and Ile-74–Val-94. The 5-phospho-alpha-D-ribose 1-diphosphate site is built by Lys-52 and Tyr-92. 2 residues coordinate Mg(2+): Asn-95 and Asp-99. Lys-109 provides a ligand contact to 5-phospho-alpha-D-ribose 1-diphosphate. Helical transmembrane passes span Ile-114–Leu-134 and Val-146–Trp-166. 5-phospho-alpha-D-ribose 1-diphosphate is bound by residues Lys-167 and Arg-184. 2 helical membrane passes run Met-169–Gly-189 and Val-190–Phe-210. Lys-215 lines the trans,octa-cis-decaprenyl phosphate pocket. Transmembrane regions (helical) follow at residues Phe-244 to Leu-264, Pro-273 to Val-293, and Val-310 to Pro-330.

This sequence belongs to the UbiA prenyltransferase family. DPPR synthase subfamily. Requires Mg(2+) as cofactor.

The protein localises to the cell inner membrane. The catalysed reaction is trans,octa-cis-decaprenyl phosphate + 5-phospho-alpha-D-ribose 1-diphosphate + H(+) = trans,octa-cis-decaprenylphospho-beta-D-ribofuranose 5-phosphate + diphosphate. It functions in the pathway cell wall biogenesis; cell wall polysaccharide biosynthesis. Functionally, involved in the biosynthesis of decaprenylphosphoryl arabinose (DPA) a precursor for arabinan synthesis in mycobacterial cell wall biosynthesis. Catalyzes the transfer of a 5-phosphoribosyl residue from phosphoribose diphosphate (PRPP) to decaprenyl phosphate (DP) to form decaprenylphosphoryl-5-phosphoribose (DPPR). The sequence is that of Decaprenyl-phosphate phosphoribosyltransferase from Corynebacterium glutamicum (strain ATCC 13032 / DSM 20300 / JCM 1318 / BCRC 11384 / CCUG 27702 / LMG 3730 / NBRC 12168 / NCIMB 10025 / NRRL B-2784 / 534).